The sequence spans 134 residues: TSC22 domain family protein 3 (134 aa).

Met1 carries the post-translational modification N-acetylmethionine. The AP1-binding stretch occupies residues 1–60 (MNTEMYQTPMEVAVYQLHNFSISFFSSLLGGDVVSVKLDNSASGASVVAIDNKIEQAMDL). Residues Ala42 and Val73 each carry the phosphoserine modification. Positions 76–97 (LKEQIRELVEKNSQLERENTLL) are leucine-zipper. Position 102 is a phosphoserine (Ser102). The interval 108 to 134 (KFQSCLSPEEPAPESPQVPEAPGGSAV) is disordered.

It belongs to the TSC-22/Dip/Bun family. Can form homodimers, however it is likely to function as a monomer. Interacts with NFKB1. Interacts (via N-terminus) with JUN and FOS; these interactions inhibit the binding of active AP1 to its target DNA. As to quaternary structure, interacts with MYOD1. Interacts with HDAC1; this interaction affects HDAC1 activity on MYOG promoter and thus inhibits MYOD1 transcriptional activity. As to expression, ubiquitously expressed, including in the fetal brain and liver. Expressed in brain, lung, spleen and skeletal muscle. Lower levels detected in heart and kidney. Not detected in the pancreas. In non-lymphoid tissues, in the absence of inflammation, the major source of constitutive expression is the macrophage lineage. Also expressed in cells from different hemopoietic cell lineages, including bone marrow cells, CD34+ stem cells, mature B- and T-cells, monocytes and granulocytes. Down-regulated in activated macrophages from inflammatory lesions of delayed-type hypersensitivity (DTH) reactions, such as in tuberculosis and in Crohn disease, whereas in Burkitt lymphoma, persists in macrophages involved in the phagocytosis of apoptotic malignant cells.

Its subcellular location is the cytoplasm. It is found in the nucleus. Protects T-cells from IL2 deprivation-induced apoptosis through the inhibition of FOXO3A transcriptional activity that leads to the down-regulation of the pro-apoptotic factor BCL2L11. In macrophages, plays a role in the anti-inflammatory and immunosuppressive effects of glucocorticoids and IL10. In T-cells, inhibits anti-CD3-induced NFKB1 nuclear translocation and thereby NFKB1 DNA-binding activities. In vitro, suppresses AP-1 transcription factor complex DNA-binding activities. Its function is as follows. Inhibits myogenic differentiation and mediates anti-myogenic effects of glucocorticoids by binding and regulating MYOD1 and HDAC1 transcriptional activity resulting in reduced expression of MYOG. The chain is TSC22 domain family protein 3 from Homo sapiens (Human).